The following is a 260-amino-acid chain: Thiazole synthase (260 aa).

K96 acts as the Schiff-base intermediate with DXP in catalysis. 1-deoxy-D-xylulose 5-phosphate is bound by residues G157, 184 to 185 (AG), and 206 to 207 (NT).

This sequence belongs to the ThiG family. As to quaternary structure, homotetramer. Forms heterodimers with either ThiH or ThiS.

It is found in the cytoplasm. The enzyme catalyses [ThiS sulfur-carrier protein]-C-terminal-Gly-aminoethanethioate + 2-iminoacetate + 1-deoxy-D-xylulose 5-phosphate = [ThiS sulfur-carrier protein]-C-terminal Gly-Gly + 2-[(2R,5Z)-2-carboxy-4-methylthiazol-5(2H)-ylidene]ethyl phosphate + 2 H2O + H(+). It participates in cofactor biosynthesis; thiamine diphosphate biosynthesis. Functionally, catalyzes the rearrangement of 1-deoxy-D-xylulose 5-phosphate (DXP) to produce the thiazole phosphate moiety of thiamine. Sulfur is provided by the thiocarboxylate moiety of the carrier protein ThiS. In vitro, sulfur can be provided by H(2)S. This chain is Thiazole synthase, found in Rhodopseudomonas palustris (strain TIE-1).